A 495-amino-acid polypeptide reads, in one-letter code: Glutamyl-tRNA(Gln) amidotransferase subunit A (495 aa).

Catalysis depends on charge relay system residues Lys-75 and Ser-150. Ser-174 (acyl-ester intermediate) is an active-site residue.

This sequence belongs to the amidase family. GatA subfamily. Heterotrimer of A, B and C subunits.

The catalysed reaction is L-glutamyl-tRNA(Gln) + L-glutamine + ATP + H2O = L-glutaminyl-tRNA(Gln) + L-glutamate + ADP + phosphate + H(+). Allows the formation of correctly charged Gln-tRNA(Gln) through the transamidation of misacylated Glu-tRNA(Gln) in organisms which lack glutaminyl-tRNA synthetase. The reaction takes place in the presence of glutamine and ATP through an activated gamma-phospho-Glu-tRNA(Gln). In Ralstonia nicotianae (strain ATCC BAA-1114 / GMI1000) (Ralstonia solanacearum), this protein is Glutamyl-tRNA(Gln) amidotransferase subunit A.